The following is a 211-amino-acid chain: Wound-induced protein WIN2 (211 aa).

Residues 1–25 (MVKLSCGPILLALVLCISLTSVANA) form the signal peptide. The Chitin-binding type-1 domain occupies 26–68 (QQCGRQRGGALCGNNLCCSQFGWCGSTPEYCSPSQGCQSQCTG). Intrachain disulfides connect cysteine 28–cysteine 43, cysteine 37–cysteine 49, cysteine 42–cysteine 56, and cysteine 62–cysteine 66. The 122-residue stretch at 77–198 (GSAQNVRATY…VNYQFVNCGD (122 aa)) folds into the Barwin domain.

The sequence is that of Wound-induced protein WIN2 (WIN2) from Solanum tuberosum (Potato).